The following is a 417-amino-acid chain: 4-hydroxy-3-methylbut-2-en-1-yl diphosphate synthase (flavodoxin) (417 aa).

Positions 304, 307, 350, and 357 each coordinate [4Fe-4S] cluster.

Belongs to the IspG family. [4Fe-4S] cluster is required as a cofactor.

It catalyses the reaction (2E)-4-hydroxy-3-methylbut-2-enyl diphosphate + oxidized [flavodoxin] + H2O + 2 H(+) = 2-C-methyl-D-erythritol 2,4-cyclic diphosphate + reduced [flavodoxin]. Its pathway is isoprenoid biosynthesis; isopentenyl diphosphate biosynthesis via DXP pathway; isopentenyl diphosphate from 1-deoxy-D-xylulose 5-phosphate: step 5/6. Its function is as follows. Converts 2C-methyl-D-erythritol 2,4-cyclodiphosphate (ME-2,4cPP) into 1-hydroxy-2-methyl-2-(E)-butenyl 4-diphosphate. The polypeptide is 4-hydroxy-3-methylbut-2-en-1-yl diphosphate synthase (flavodoxin) (Sinorhizobium medicae (strain WSM419) (Ensifer medicae)).